A 106-amino-acid polypeptide reads, in one-letter code: MKKITTNEQFNELIQSDKEIIVKFYADWCPDCTRMNMFIGDILEEYNQNDWYELNKDELPDLAEKYQVMGIPSLLIFKNGEKTAHLHSANAKTPEEVTEFLSEHIS.

The Thioredoxin domain maps to 1 to 106 (MKKITTNEQF…VTEFLSEHIS (106 aa)). Cysteine 29 and cysteine 32 are oxidised to a cystine.

Belongs to the thioredoxin family.

Functionally, participates in various redox reactions through the reversible oxidation of its active center dithiol to a disulfide and catalyzes dithiol-disulfide exchange reactions. The protein is Thioredoxin-like protein YdbP (ydbP) of Bacillus subtilis (strain 168).